A 68-amino-acid polypeptide reads, in one-letter code: Lipopolysaccharide export system ATP-binding protein LptB (68 aa).

Belongs to the ABC transporter superfamily. Outer membrane lipopolysaccharide export (TC 1.B.42) family. As to quaternary structure, component of the lipopolysaccharide transport and assembly complex. The LptBFG transporter is composed of two ATP-binding proteins (LptB) and two transmembrane proteins (LptF and LptG).

The protein localises to the cytoplasm. It localises to the cell inner membrane. Functionally, part of the ABC transporter complex LptBFG involved in the translocation of lipopolysaccharide (LPS) from the inner membrane to the outer membrane. Probably responsible for energy coupling to the transport system. This chain is Lipopolysaccharide export system ATP-binding protein LptB (lptB), found in Klebsiella oxytoca.